The following is a 556-amino-acid chain: Polypeptide N-acetylgalactosaminyltransferase 13 (556 aa).

At 1 to 4 the chain is on the cytoplasmic side; that stretch reads MRRL. Residues 5–27 traverse the membrane as a helical; Signal-anchor for type II membrane protein segment; that stretch reads VYCKVVLATSLMWVLVDVFLLLY. Topologically, residues 28–556 are lumenal; sequence FSECNKCDDK…WLLRNMTLGT (529 aa). N-linked (GlcNAc...) asparagine glycans are attached at residues Asn94 and Asn116. 5 disulfides stabilise this stretch: Cys105/Cys338, Cys329/Cys407, Cys441/Cys458, Cys481/Cys496, and Cys522/Cys539. Residues 114 to 224 form a catalytic subdomain A region; sequence LPNTSVVIVF…LGWLEPLLAR (111 aa). 2 residues coordinate substrate: Asp155 and Arg185. 2 residues coordinate Mn(2+): Asp208 and His210. Residues 284 to 346 form a catalytic subdomain B region; it reads PVRTPTMAGG…TCSHVGHVFR (63 aa). Position 315 (Trp315) interacts with substrate. Mn(2+) is bound at residue His343. Substrate-binding residues include Arg346 and Tyr351. The 123-residue stretch at 428 to 550 folds into the Ricin B-type lectin domain; the sequence is YSLGEIRNVE…GSRSQQWLLR (123 aa). Asn551 carries N-linked (GlcNAc...) asparagine glycosylation.

Belongs to the glycosyltransferase 2 family. GalNAc-T subfamily. Requires Mn(2+) as cofactor.

The protein localises to the golgi apparatus membrane. The catalysed reaction is L-seryl-[protein] + UDP-N-acetyl-alpha-D-galactosamine = a 3-O-[N-acetyl-alpha-D-galactosaminyl]-L-seryl-[protein] + UDP + H(+). It catalyses the reaction L-threonyl-[protein] + UDP-N-acetyl-alpha-D-galactosamine = a 3-O-[N-acetyl-alpha-D-galactosaminyl]-L-threonyl-[protein] + UDP + H(+). It functions in the pathway protein modification; protein glycosylation. Catalyzes the initial reaction in O-linked oligosaccharide biosynthesis, the transfer of an N-acetyl-D-galactosamine (GalNAc) residue from UDP-GalNAc to a serine or threonine residue on the protein receptor. Generates GalNAc-O-Ser/Thr structure also known as Tn antigen, which itself is immunogenic but also serves as a precursor for the synthesis of different mucin-type O-glycan core structures. Contributes to the synthesis of O-linked glycans on mucins and proteoglycans of the central nervous system. Can glycosylate both unmodified peptides and glycopeptides that already contain an O-linked GalNAc sugar. Transfers GalNAc to Thr-/Ser-rich tandem repeats GTTPSPVPTTSTTSAP of MUC5AC. Transfers GalNAc to three consecutive serine/threonine residues on SDC3 forming a triplet-Tn epitope expressed in Purkinje cells of the developing brain. May promote neurogenesis through glycosylation and stabilization of PDPN. The polypeptide is Polypeptide N-acetylgalactosaminyltransferase 13 (Galnt13) (Rattus norvegicus (Rat)).